We begin with the raw amino-acid sequence, 245 residues long: Carbohydrate deacetylase (245 aa).

Residues His59 and His125 each coordinate Mg(2+).

This sequence belongs to the YdjC deacetylase family. As to quaternary structure, homodimer. Mg(2+) is required as a cofactor.

In terms of biological role, probably catalyzes the deacetylation of acetylated carbohydrates an important step in the degradation of oligosaccharides. The polypeptide is Carbohydrate deacetylase (Listeria monocytogenes serotype 4a (strain HCC23)).